The sequence spans 515 residues: ATP synthase subunit alpha (515 aa).

169 to 176 provides a ligand contact to ATP; that stretch reads GDRQTGKT.

Belongs to the ATPase alpha/beta chains family. F-type ATPases have 2 components, CF(1) - the catalytic core - and CF(0) - the membrane proton channel. CF(1) has five subunits: alpha(3), beta(3), gamma(1), delta(1), epsilon(1). CF(0) has three main subunits: a(1), b(2) and c(9-12). The alpha and beta chains form an alternating ring which encloses part of the gamma chain. CF(1) is attached to CF(0) by a central stalk formed by the gamma and epsilon chains, while a peripheral stalk is formed by the delta and b chains.

The protein localises to the cell inner membrane. It carries out the reaction ATP + H2O + 4 H(+)(in) = ADP + phosphate + 5 H(+)(out). Produces ATP from ADP in the presence of a proton gradient across the membrane. The alpha chain is a regulatory subunit. The protein is ATP synthase subunit alpha of Neisseria meningitidis serogroup C / serotype 2a (strain ATCC 700532 / DSM 15464 / FAM18).